The following is a 156-amino-acid chain: Small ribosomal subunit protein uS7 (156 aa).

The protein belongs to the universal ribosomal protein uS7 family. In terms of assembly, part of the 30S ribosomal subunit. Contacts proteins S9 and S11.

In terms of biological role, one of the primary rRNA binding proteins, it binds directly to 16S rRNA where it nucleates assembly of the head domain of the 30S subunit. Is located at the subunit interface close to the decoding center, probably blocks exit of the E-site tRNA. The chain is Small ribosomal subunit protein uS7 from Chromohalobacter salexigens (strain ATCC BAA-138 / DSM 3043 / CIP 106854 / NCIMB 13768 / 1H11).